The primary structure comprises 471 residues: 5-hydroxytryptamine receptor 2B (471 aa).

Topologically, residues 1 to 26 (MFQAAVGPLQTNISLPEETPGLELNW) are extracellular. N-linked (GlcNAc...) asparagine glycosylation is present at asparagine 12. The chain crosses the membrane as a helical span at residues 27-49 (AALLIVMVIIPTIGGNILVILAV). Topologically, residues 50 to 60 (WLEKKLQNATN) are cytoplasmic. The chain crosses the membrane as a helical span at residues 61–83 (FFLMSLAVADLLVGLLVMPIALI). The Extracellular segment spans residues 84–99 (TILYDSDWPLPEPLCP). A disulfide bridge links cysteine 98 with cysteine 182. The chain crosses the membrane as a helical span at residues 100 to 121 (IWLFLDVLFSTASIMHLCAISL). Residues aspartate 105 and threonine 110 each coordinate ergotamine. A DRY motif; important for ligand-induced conformation changes motif is present at residues 122–124 (DRY). The Cytoplasmic segment spans residues 122–141 (DRYIAIKKPIQHSQYKSRAK). Residues 142-162 (VMLKIALVWLISICIAIPIPI) form a helical membrane-spanning segment. Residues 163 to 191 (KGLRNYPHPNNITFTSNHTCVLKTDTFQE) are Extracellular-facing. Asparagine 173 and asparagine 179 each carry an N-linked (GlcNAc...) asparagine glycan. Position 184 (leucine 184) interacts with ergotamine. Positions 187-190 (DTFQ) match the [DE]RFG motif; may stabilize a conformation that preferentially activates signaling via beta-arrestin family members motif. Residues 192–214 (FIIFGSLVAFFIPLTIMMIIYFL) traverse the membrane as a helical segment. Topologically, residues 215-308 (TVRVLRKKVY…TLTNEQRASK (94 aa)) are cytoplasmic. The helical transmembrane segment at 309-329 (VLGIVFLLFVVMWCPFFITNI) threads the bilayer. The Extracellular portion of the chain corresponds to 330–344 (TSALCGPCDANIIGR). Cysteine 334 and cysteine 337 are oxidised to a cystine. Residues 345 to 366 (LMEIFSWVGYVSSGINPLVYTL) traverse the membrane as a helical segment. The NPxxY motif; important for ligand-induced conformation changes and signaling motif lies at 360–364 (NPLVY). At 367–471 (FNKTFRQAFT…CKQEERVSCV (105 aa)) the chain is on the cytoplasmic side. Residue cysteine 381 is the site of S-palmitoyl cysteine attachment. A PDZ-binding motif is present at residues 469 to 471 (SCV).

The protein belongs to the G-protein coupled receptor 1 family. As to expression, detected in brain, heart and gut.

It localises to the cell membrane. The protein localises to the synapse. It is found in the synaptosome. G-protein coupled receptor for 5-hydroxytryptamine (serotonin). Also functions as a receptor for various ergot alkaloid derivatives and psychoactive substances. Ligand binding causes a conformation change that triggers signaling via guanine nucleotide-binding proteins (G proteins) and modulates the activity of downstream effectors. HTR2B is coupled to G(q)/G(11) G alpha proteins and activates phospholipase C-beta, releasing diacylglycerol (DAG) and inositol 1,4,5-trisphosphate (IP3) second messengers that modulate the activity of phosphatidylinositol 3-kinase and promote the release of Ca(2+) ions from intracellular stores, respectively. Beta-arrestin family members inhibit signaling via G proteins and mediate activation of alternative signaling pathways. Plays a role in the regulation of dopamine and 5-hydroxytryptamine release, 5-hydroxytryptamine uptake and in the regulation of extracellular dopamine and 5-hydroxytryptamine levels, and thereby affects neural activity. The chain is 5-hydroxytryptamine receptor 2B (htr2b) from Dichotomyctere fluviatilis (Green pufferfish).